Here is a 75-residue protein sequence, read N- to C-terminus: Large ribosomal subunit protein bL31 (75 aa).

This sequence belongs to the bacterial ribosomal protein bL31 family. Type A subfamily. Part of the 50S ribosomal subunit.

In terms of biological role, binds the 23S rRNA. This is Large ribosomal subunit protein bL31 from Gluconobacter oxydans (strain 621H) (Gluconobacter suboxydans).